The primary structure comprises 373 residues: Alanine dehydrogenase (373 aa).

Residues Arg15 and Lys74 each coordinate substrate. His95 serves as the catalytic Proton donor/acceptor. NAD(+) is bound by residues Ser133, 177–178 (QA), Asp197, Ser219, 238–239 (VL), 266–269 (IAID), and 298–301 (VANM). Residue Asp269 is the Proton donor/acceptor of the active site.

It belongs to the AlaDH/PNT family. As to quaternary structure, homohexamer. Trimer of dimer.

The enzyme catalyses L-alanine + NAD(+) + H2O = pyruvate + NH4(+) + NADH + H(+). It functions in the pathway amino-acid degradation; L-alanine degradation via dehydrogenase pathway; NH(3) and pyruvate from L-alanine: step 1/1. Its function is as follows. Catalyzes the reversible reductive amination of pyruvate to L-alanine. May play a role in cell wall synthesis as L-alanine is an important constituent of the peptidoglycan layer. This is Alanine dehydrogenase (ald) from Staphylococcus haemolyticus (strain JCSC1435).